The sequence spans 638 residues: DNA gyrase subunit B (638 aa).

A Toprim domain is found at 431–545 (RELFIVEGNS…YGFVYIAQPP (115 aa)). Mg(2+) is bound by residues E437, D510, and D512.

This sequence belongs to the type II topoisomerase GyrB family. Heterotetramer, composed of two GyrA and two GyrB chains. In the heterotetramer, GyrA contains the active site tyrosine that forms a transient covalent intermediate with DNA, while GyrB binds cofactors and catalyzes ATP hydrolysis. It depends on Mg(2+) as a cofactor. Requires Mn(2+) as cofactor. Ca(2+) is required as a cofactor.

The protein resides in the cytoplasm. It carries out the reaction ATP-dependent breakage, passage and rejoining of double-stranded DNA.. Functionally, a type II topoisomerase that negatively supercoils closed circular double-stranded (ds) DNA in an ATP-dependent manner to modulate DNA topology and maintain chromosomes in an underwound state. Negative supercoiling favors strand separation, and DNA replication, transcription, recombination and repair, all of which involve strand separation. Also able to catalyze the interconversion of other topological isomers of dsDNA rings, including catenanes and knotted rings. Type II topoisomerases break and join 2 DNA strands simultaneously in an ATP-dependent manner. The protein is DNA gyrase subunit B of Metamycoplasma arthritidis (Mycoplasma arthritidis).